A 308-amino-acid polypeptide reads, in one-letter code: Ribosomal RNA small subunit methyltransferase H (308 aa).

Residues 38–40 (GGH), Asp58, Phe82, Asp99, and Gln106 each bind S-adenosyl-L-methionine.

Belongs to the methyltransferase superfamily. RsmH family.

It localises to the cytoplasm. The enzyme catalyses cytidine(1402) in 16S rRNA + S-adenosyl-L-methionine = N(4)-methylcytidine(1402) in 16S rRNA + S-adenosyl-L-homocysteine + H(+). Specifically methylates the N4 position of cytidine in position 1402 (C1402) of 16S rRNA. The protein is Ribosomal RNA small subunit methyltransferase H of Acidovorax sp. (strain JS42).